Here is a 325-residue protein sequence, read N- to C-terminus: Tartrate-resistant acid phosphatase type 5 (325 aa).

Positions 1–21 (MDMWTALLILQALLLPSLADG) are cleaved as a signal peptide. D33, D71, Y74, and N110 together coordinate Fe cation. N-linked (GlcNAc...) asparagine glycosylation is found at N116 and N147. Residues C161 and C219 are joined by a disulfide bond. Fe cation is bound by residues H205, H240, and H242.

The protein belongs to the metallophosphoesterase superfamily. Purple acid phosphatase family. Exists either as monomer or, after proteolytic processing, as a dimer of two chains linked by disulfide bond(s). Fe cation serves as cofactor.

The protein localises to the lysosome. The catalysed reaction is a phosphate monoester + H2O = an alcohol + phosphate. In terms of biological role, involved in osteopontin/bone sialoprotein dephosphorylation. Its expression seems to increase in certain pathological states such as Gaucher and Hodgkin diseases, the hairy cell, the B-cell, and the T-cell leukemias. This is Tartrate-resistant acid phosphatase type 5 (ACP5) from Homo sapiens (Human).